The primary structure comprises 155 residues: Small ribosomal subunit protein uS7 (155 aa).

It belongs to the universal ribosomal protein uS7 family. In terms of assembly, part of the 30S ribosomal subunit. Contacts proteins S9 and S11.

One of the primary rRNA binding proteins, it binds directly to 16S rRNA where it nucleates assembly of the head domain of the 30S subunit. Is located at the subunit interface close to the decoding center, probably blocks exit of the E-site tRNA. In Thermotoga maritima (strain ATCC 43589 / DSM 3109 / JCM 10099 / NBRC 100826 / MSB8), this protein is Small ribosomal subunit protein uS7.